The following is a 632-amino-acid chain: MSVHHAAYIDYALRVTENMTDVMTGSDTVTLKSYQHFVSRVFLGLDKMHSLLLFHETGVGKTITTVFILKHLKDVYTNWIIILLVKKALVEDPWTYSITKYAPEILKDCIFITYDDKNFHNKFFTNIKTISSRSRLCIIIDECHNFISKSIVKEDGKQRPTKSVYNYLLKNVALHHHKLICLSATPIVNSVKEFIMLVNLLRPKILNNISLFENKRLINESELINKLGAICSYIVTNEFSIFDDVEGSATFAKKNVYFQYVNMTQKQEQVYQKAKSAELKAGTSSFRIYRRMAATFTFDTFLDKTDKTPEEIVNEQVTLYKDFEKFIKTKKFSDHALSHFKKGQSLNGTSSADDISFLNELREHSCKFTDVCLRILASPGKCLVFEPFVNQSGINILLLYFSAFNISYIEFSSRTKNTRVQSVAEFNKRENTNGDLIKTCVFSLSGGEGISFFSINDIFILDMTWNEASLRQIIGRAIRLNSHVLTPEHRRYVYVHFIIARLSNGDPTVDEDLLDIIRNKSKEFTQLFKVFKHTSIEWIYEHQTNFSPVDDESGWGALISRSIDENPTTKRVPRIARGQNIWYSHSNRMITVYKGFKTDDGRLFDSDGNFIQTIQANPVIKIHNNKLVYVLD.

The Helicase ATP-binding domain occupies 42 to 204 (FLGLDKMHSL…IMLVNLLRPK (163 aa)). An ATP-binding site is contributed by 55 to 62 (HETGVGKT). Positions 141-144 (DECH) match the DEXH box motif. In terms of domain architecture, Helicase C-terminal spans 367–532 (KFTDVCLRIL…EFTQLFKVFK (166 aa)). Residues 457–524 (DIFILDMTWN…DIIRNKSKEF (68 aa)) form a binding to the cap-specific mRNA (nucleoside-2'-O-)-methyltransferase region.

It belongs to the helicase family. NPH I subfamily. Monomer. Interacts (via C-terminus) with RAP94 (via N-terminus). Interacts with the cap-specific mRNA (nucleoside-2'-O-)-methyltransferase.

Its subcellular location is the virion. The enzyme catalyses a ribonucleoside 5'-triphosphate + H2O = a ribonucleoside 5'-diphosphate + phosphate + H(+). Functionally, DNA-dependent ATPase required for providing the needed energy to achieve the termination of early transcripts. Acts in concert with the RAP94 subunit of the virion RNA polymerase and the capping enzyme/VTF to catalyze release of UUUUUNU-containing nascent RNA from the elongation complex. NPH-I must bind ssDNA in order to exhibit ATPase activity. The polypeptide is Nucleoside triphosphatase I (NPH1) (Rabbit fibroma virus (strain Kasza) (RFV)).